The chain runs to 434 residues: Methylenetetrahydrofolate--tRNA-(uracil-5-)-methyltransferase TrmFO (434 aa).

10–15 (GAGLAG) is an FAD binding site.

Belongs to the MnmG family. TrmFO subfamily. The cofactor is FAD.

The protein resides in the cytoplasm. It catalyses the reaction uridine(54) in tRNA + (6R)-5,10-methylene-5,6,7,8-tetrahydrofolate + NADH + H(+) = 5-methyluridine(54) in tRNA + (6S)-5,6,7,8-tetrahydrofolate + NAD(+). The enzyme catalyses uridine(54) in tRNA + (6R)-5,10-methylene-5,6,7,8-tetrahydrofolate + NADPH + H(+) = 5-methyluridine(54) in tRNA + (6S)-5,6,7,8-tetrahydrofolate + NADP(+). Its function is as follows. Catalyzes the folate-dependent formation of 5-methyl-uridine at position 54 (M-5-U54) in all tRNAs. This Bacillus cereus (strain G9842) protein is Methylenetetrahydrofolate--tRNA-(uracil-5-)-methyltransferase TrmFO.